The sequence spans 247 residues: NADH-ubiquinone oxidoreductase chain 6 (247 aa).

5 helical membrane passes run 18–38, 44–64, 70–90, 104–124, and 168–188; these read TMIL…VVRA, SVLF…LLGL, ISPV…VMMF, YLPV…FILD, and VWFL…IVLT.

This sequence belongs to the complex I subunit 6 family.

It is found in the mitochondrion membrane. It catalyses the reaction a ubiquinone + NADH + 5 H(+)(in) = a ubiquinol + NAD(+) + 4 H(+)(out). Functionally, core subunit of the mitochondrial membrane respiratory chain NADH dehydrogenase (Complex I) that is believed to belong to the minimal assembly required for catalysis. Complex I functions in the transfer of electrons from NADH to the respiratory chain. The immediate electron acceptor for the enzyme is believed to be ubiquinone. The chain is NADH-ubiquinone oxidoreductase chain 6 (ND6) from Triticum aestivum (Wheat).